The sequence spans 227 residues: Ion-translocating oxidoreductase complex subunit E (227 aa).

Helical transmembrane passes span 34–56 (AINA…TIIS), 68–88 (IPIY…LLHA), 91–111 (FNLY…CIIV), 127–147 (FFDG…VGSI), and 181–201 (TIIL…LIAI).

It belongs to the NqrDE/RnfAE family. As to quaternary structure, the complex is composed of six subunits: RnfA, RnfB, RnfC, RnfD, RnfE and RnfG.

Its subcellular location is the cell inner membrane. Functionally, part of a membrane-bound complex that couples electron transfer with translocation of ions across the membrane. The sequence is that of Ion-translocating oxidoreductase complex subunit E from Buchnera aphidicola subsp. Acyrthosiphon pisum (strain 5A).